A 238-amino-acid chain; its full sequence is Ribonuclease 3 (238 aa).

Positions 17 to 140 constitute an RNase III domain; it reads YATLEKALGY…LMAGVYLEAG (124 aa). Residue glutamate 53 participates in Mg(2+) binding. Residue aspartate 57 is part of the active site. 2 residues coordinate Mg(2+): serine 126 and glutamate 129. Residue glutamate 129 is part of the active site. The DRBM domain occupies 167 to 236; sequence DYKTALQELT…AYQALQKLKE (70 aa).

This sequence belongs to the ribonuclease III family. As to quaternary structure, homodimer. It depends on Mg(2+) as a cofactor.

Its subcellular location is the cytoplasm. The catalysed reaction is Endonucleolytic cleavage to 5'-phosphomonoester.. In terms of biological role, digests double-stranded RNA. Involved in the processing of primary rRNA transcript to yield the immediate precursors to the large and small rRNAs (23S and 16S). Processes some mRNAs, and tRNAs when they are encoded in the rRNA operon. Processes pre-crRNA and tracrRNA of type II CRISPR loci if present in the organism. The protein is Ribonuclease 3 of Helicobacter pylori (strain Shi470).